We begin with the raw amino-acid sequence, 159 residues long: Ribosomal RNA large subunit methyltransferase H (159 aa).

Residues Leu-76, Gly-108, and 127–132 (FGLLTL) contribute to the S-adenosyl-L-methionine site.

It belongs to the RNA methyltransferase RlmH family. Homodimer.

It localises to the cytoplasm. The catalysed reaction is pseudouridine(1915) in 23S rRNA + S-adenosyl-L-methionine = N(3)-methylpseudouridine(1915) in 23S rRNA + S-adenosyl-L-homocysteine + H(+). Specifically methylates the pseudouridine at position 1915 (m3Psi1915) in 23S rRNA. The sequence is that of Ribosomal RNA large subunit methyltransferase H from Streptococcus equi subsp. zooepidemicus (strain MGCS10565).